We begin with the raw amino-acid sequence, 962 residues long: MSSTTLTQLEHHDEFISRHIGPSADEQKAMLAELGVDSLEALTKDTVPGAILREPFLQTGEPQTEREALARLKNIAKKNQICTSYIGMGYYDTVVPNVILRNVLENPGWYTAYTPYQPEIAQGRLEALLNFQQMTMDLTGLDLASASLLDEATAAAEAMAMAKRVSKNKKSNAFFIADNVYTQTIDVVKTRAEYFGFDIIVGPAREASDHDVFGALLQYPDKQGQLHNIEQLIGELQEKKAIVAVASDLMSLLMVKSPGEMGADMVFGNAQRFGVPMGYGGPHAAFFATRDKFKRSLPGRIIGVSKDSRGRPALRMAMQTREQHIRREKANSNICTAQVLLANMASFYAVYHGPDGLRRIANRIHRLTDIVALGMQDKGVKLVNSHWFDTLTFEMKENAADVLARSKALGLNLRVDGEGMFGISLDEAKTRDDVESLFAALFGDNHGLDIDVLDSRVAGGDVESIPADLVRQSQYLQHPVFNEYHSETEMLRYIKKLENKDLALNHSMISLGSCTMKLNATAEMIPVTWPEFGQLHPFCPAEQAQGYYELVSTLSEWLIDVTGYDAMSMQPNSGAQGEYAGLLAIQKYHESRGDGHRNICLIPSSAHGTNPASAQMMNMKVVVVDCDKHGNVDMDDLKAKAEEAGENLSCIMVTYPSTHGVYEEGIKDICDLVHNYGGQVYMDGANMNAQVGVTSPGYIGSDVSHLNLHKTFCIPHGGGGPGMGPIGVKQHLAEFLPNHSIVNIDGPKAGNGAVSAAQFGSASILTISWMYIAMMGGRGLREASETAILNANYLAEKLSKHFKILYRGRNNRVAHECIIDLRPMKDAAGIAEIDVAKRLQDYGFHSPTMSFPVAGTIMVEPTESESKAELDRFIEALVSIKAEAEKVAAGEWPKDNNPLVNAPHTLADITDAEWDRPYDRKTATYPVEAVGYDKFWPTVNRIDDVFGDRNLMCSCPSIEEYR.

An N6-(pyridoxal phosphate)lysine modification is found at lysine 710.

This sequence belongs to the GcvP family. In terms of assembly, the glycine cleavage system is composed of four proteins: P, T, L and H. Pyridoxal 5'-phosphate is required as a cofactor.

The catalysed reaction is N(6)-[(R)-lipoyl]-L-lysyl-[glycine-cleavage complex H protein] + glycine + H(+) = N(6)-[(R)-S(8)-aminomethyldihydrolipoyl]-L-lysyl-[glycine-cleavage complex H protein] + CO2. Functionally, the glycine cleavage system catalyzes the degradation of glycine. The P protein binds the alpha-amino group of glycine through its pyridoxal phosphate cofactor; CO(2) is released and the remaining methylamine moiety is then transferred to the lipoamide cofactor of the H protein. The protein is Glycine dehydrogenase (decarboxylating) of Idiomarina loihiensis (strain ATCC BAA-735 / DSM 15497 / L2-TR).